We begin with the raw amino-acid sequence, 347 residues long: Leukocyte cell-derived chemotaxin 1 (347 aa).

Residues 1–29 form a disordered region; it reads MAEGSEKVPIARAGPEDVEQGLPPAYTAA. A helical transmembrane segment spans residues 45–65; sequence VLIAGALLLLAGAIGAFYFWK. Residues 103–200 enclose the BRICHOS domain; sequence GSGSEEAVEV…LCGDLPIFWL (98 aa). An intrachain disulfide couples cysteine 130 to cysteine 192. The interval 208-281 is disordered; that stretch reads KQRERREMKR…DNPYNQLEGE (74 aa). Residues 210-213 constitute a propeptide that is removed on maturation; it reads RERR. Residues 240–276 are compositionally biased toward polar residues; sequence TRSTPTQLTQDLGPQSNETRPMQQESDQTLNPDNPYN. Asparagine 256 is a glycosylation site (N-linked (GlcNAc...) asparagine). 4 disulfides stabilise this stretch: cysteine 295/cysteine 299, cysteine 296/cysteine 336, cysteine 306/cysteine 330, and cysteine 310/cysteine 326.

This sequence belongs to the chondromodulin-1 family. In terms of processing, after cleavage, the post-translationally modified ChM-I is secreted as a glycoprotein. In terms of tissue distribution, expressed in the cartilage and in fetal precartilaginous tissues as well as in heart and eye.

The protein localises to the secreted. It is found in the extracellular space. It localises to the extracellular matrix. Its subcellular location is the endomembrane system. Functionally, bifunctional growth regulator. May contribute to the rapid growth of cartilage and vascular invasion prior to the replacement of cartilage by bone during endochondral bone development. Plays a role as antiangiogenic factor in cardiac valves to suppress neovascularization. The chain is Leukocyte cell-derived chemotaxin 1 from Gallus gallus (Chicken).